The following is a 353-amino-acid chain: Inactive ADP-ribosyltransferase ARH2 (353 aa).

A Phosphoserine modification is found at serine 27.

This sequence belongs to the ADP-ribosylglycohydrolase family. As to expression, expressed in the embryonic heart at E11.5.

The protein resides in the cytoplasm. It localises to the myofibril. Its subcellular location is the sarcomere. Required for myofibril assembly and outgrowth of the cardiac chambers in the developing heart. Appears to be catalytically inactive, showing no activity against O-acetyl-ADP-ribose. The polypeptide is Inactive ADP-ribosyltransferase ARH2 (Adprhl1) (Mus musculus (Mouse)).